A 725-amino-acid chain; its full sequence is ATP-dependent rRNA helicase SPB4 (725 aa).

A Q motif motif is present at residues 15–43 (WAKLNPPLSPWILDVINSMGFKNMTPVQA). A Helicase ATP-binding domain is found at 46–260 (IPRAVKNQDC…GLGLRNPVRI (215 aa)). 59–66 (AVTGSGKT) contributes to the ATP binding site. The disordered stretch occupies residues 119–156 (ESEEETGDVEAHAPPFASSSRSPSPQTPDKPLFPLPML). Positions 132–142 (PPFASSSRSPS) are enriched in low complexity. Pro residues predominate over residues 143–152 (PQTPDKPLFP). The DEAD box signature appears at 207 to 210 (DEAD). The 164-residue stretch at 295 to 458 (KTLQLIRLLL…YINAYLEEVD (164 aa)) folds into the Helicase C-terminal domain. The disordered stretch occupies residues 591 to 725 (AQRADNQSSN…IGGGMFDDLE (135 aa)). Composition is skewed to basic and acidic residues over residues 603–646 (ARAE…KYEW) and 685–707 (EIGK…KESS). Positions 709-725 (GGAGGGGIGGGMFDDLE) are enriched in gly residues.

This sequence belongs to the DEAD box helicase family. DDX55/SPB4 subfamily. In terms of assembly, component of pre-60S ribosomal complexes.

It is found in the nucleus. The protein resides in the nucleolus. It catalyses the reaction ATP + H2O = ADP + phosphate + H(+). In terms of biological role, ATP-binding RNA helicase involved in the biogenesis of 60S ribosomal subunits. Binds 90S pre-ribosomal particles and dissociates from pre-60S ribosomal particles after processing of 27SB pre-rRNA. Required for the normal formation of 18S rRNA through the processing of pre-rRNAs at sites A0, A1 and A2, and the normal formation of 25S and 5.8S rRNAs through the processing of pre-rRNAs at sites C1 and C2. This chain is ATP-dependent rRNA helicase SPB4, found in Cryptococcus neoformans var. neoformans serotype D (strain JEC21 / ATCC MYA-565) (Filobasidiella neoformans).